A 104-amino-acid chain; its full sequence is uncharacterized protein (104 aa).

Homodimer.

This is an uncharacterized protein from Bacillus subtilis (strain 168).